The sequence spans 149 residues: ER export of PMA1 protein 1 (149 aa).

The Lumenal segment spans residues 1–6; the sequence is MNLYGY. Residues 7 to 27 form a helical; Signal-anchor for type II membrane protein membrane-spanning segment; the sequence is FLLLIIVIAFIALLPLFSGIG. Topologically, residues 28 to 149 are cytoplasmic; that stretch reads TFKLTKPKSS…KKNEAYEGFV (122 aa).

Interacts with PMA1 and PSG1.

It is found in the endoplasmic reticulum membrane. The protein resides in the cytoplasmic vesicle. The protein localises to the COPI-coated vesicle membrane. Its subcellular location is the COPII-coated vesicle membrane. It localises to the golgi apparatus membrane. Its function is as follows. Specific cargo receptor protein for the plasma membrane ATPase PMA1 that acts with PSG1 to promote the transport and maturation of PMA1. EXP1 and PSG1 probably act sequentially to promote PMA1 sorting between the ER and the Golgi, with EXP1 promoting PMA1 export from the ER to the Golgi while PSG1 has a role in PMA1 maturation or quality control in the Golgi. This chain is ER export of PMA1 protein 1, found in Saccharomyces cerevisiae (strain ATCC 204508 / S288c) (Baker's yeast).